A 100-amino-acid polypeptide reads, in one-letter code: uncharacterized protein (100 aa).

The helical transmembrane segment at 28–45 threads the bilayer; sequence VFLVFYIITMVKIYIFLI.

It is found in the membrane. This is an uncharacterized protein from Saccharomyces cerevisiae (strain ATCC 204508 / S288c) (Baker's yeast).